A 93-amino-acid chain; its full sequence is UPF0473 protein CHY_0543 (93 aa).

This sequence belongs to the UPF0473 family.

The sequence is that of UPF0473 protein CHY_0543 from Carboxydothermus hydrogenoformans (strain ATCC BAA-161 / DSM 6008 / Z-2901).